We begin with the raw amino-acid sequence, 81 residues long: Exodeoxyribonuclease 7 small subunit (81 aa).

The protein belongs to the XseB family. In terms of assembly, heterooligomer composed of large and small subunits.

The protein resides in the cytoplasm. It catalyses the reaction Exonucleolytic cleavage in either 5'- to 3'- or 3'- to 5'-direction to yield nucleoside 5'-phosphates.. Its function is as follows. Bidirectionally degrades single-stranded DNA into large acid-insoluble oligonucleotides, which are then degraded further into small acid-soluble oligonucleotides. This chain is Exodeoxyribonuclease 7 small subunit, found in Rhodopseudomonas palustris (strain BisA53).